We begin with the raw amino-acid sequence, 134 residues long: Small ribosomal subunit protein uS12 (134 aa).

The disordered stretch occupies residues 1–27; it reads MPTIQQLVRKGRESFADKSKSPALNSC. Positions 10–20 are enriched in basic and acidic residues; that stretch reads KGRESFADKSK. At Asp-89 the chain carries 3-methylthioaspartic acid. Positions 103–134 are disordered; the sequence is DTAGVNGRTQRRSKYGAKRPKPGQAPAAKGKK. The span at 111–123 shows a compositional bias: basic residues; sequence TQRRSKYGAKRPK. Positions 124 to 134 are enriched in low complexity; sequence PGQAPAAKGKK.

Belongs to the universal ribosomal protein uS12 family. As to quaternary structure, part of the 30S ribosomal subunit. Contacts proteins S8 and S17. May interact with IF1 in the 30S initiation complex.

Its function is as follows. With S4 and S5 plays an important role in translational accuracy. In terms of biological role, interacts with and stabilizes bases of the 16S rRNA that are involved in tRNA selection in the A site and with the mRNA backbone. Located at the interface of the 30S and 50S subunits, it traverses the body of the 30S subunit contacting proteins on the other side and probably holding the rRNA structure together. The combined cluster of proteins S8, S12 and S17 appears to hold together the shoulder and platform of the 30S subunit. In Porphyromonas gingivalis (strain ATCC 33277 / DSM 20709 / CIP 103683 / JCM 12257 / NCTC 11834 / 2561), this protein is Small ribosomal subunit protein uS12.